Consider the following 565-residue polypeptide: NAD-dependent malic enzyme (565 aa).

Y104 (proton donor) is an active-site residue. NAD(+) is bound at residue R157. The active-site Proton acceptor is K175. A divalent metal cation contacts are provided by E246, D247, and D270. NAD(+) is bound by residues D270 and N418.

It belongs to the malic enzymes family. In terms of assembly, homotetramer. Requires Mg(2+) as cofactor. Mn(2+) is required as a cofactor.

The enzyme catalyses (S)-malate + NAD(+) = pyruvate + CO2 + NADH. The catalysed reaction is oxaloacetate + H(+) = pyruvate + CO2. The chain is NAD-dependent malic enzyme from Salmonella dublin (strain CT_02021853).